Consider the following 581-residue polypeptide: Pectinesterase 3 (581 aa).

The signal sequence occupies residues 1-55 (MDTIKSFKGYGKVNELEQQAYEKKTRKRLIIIAVSSIVLIAVIIAAVAGVVIHNR). 5 N-linked (GlcNAc...) asparagine glycosylation sites follow: Asn101, Asn156, Asn200, Asn217, and Asn268. Residues Thr348 and Gln378 each contribute to the substrate site. Asp401 acts as the Proton donor in catalysis. The cysteines at positions 415 and 435 are disulfide-linked. Catalysis depends on Asp422, which acts as the Nucleophile. N-linked (GlcNAc...) asparagine glycosylation occurs at Asn477. Substrate is bound by residues Arg486 and Trp488.

This sequence in the N-terminal section; belongs to the PMEI family. It in the C-terminal section; belongs to the pectinesterase family.

It localises to the secreted. Its subcellular location is the cell wall. It catalyses the reaction [(1-&gt;4)-alpha-D-galacturonosyl methyl ester](n) + n H2O = [(1-&gt;4)-alpha-D-galacturonosyl](n) + n methanol + n H(+). The protein operates within glycan metabolism; pectin degradation; 2-dehydro-3-deoxy-D-gluconate from pectin: step 1/5. May have roles in the deposition of pectin in developing tissues and in the wall loosening and cell separation that occurs in cell expansion, fruit ripening and abscission. The chain is Pectinesterase 3 (MPE3) from Phaseolus vulgaris (Kidney bean).